The primary structure comprises 252 residues: Hydroxyacylglutathione hydrolase (252 aa).

Zn(2+)-binding residues include His54, His56, Asp58, His59, His111, Asp128, and His166.

The protein belongs to the metallo-beta-lactamase superfamily. Glyoxalase II family. As to quaternary structure, monomer. The cofactor is Zn(2+).

It catalyses the reaction an S-(2-hydroxyacyl)glutathione + H2O = a 2-hydroxy carboxylate + glutathione + H(+). It functions in the pathway secondary metabolite metabolism; methylglyoxal degradation; (R)-lactate from methylglyoxal: step 2/2. Its function is as follows. Thiolesterase that catalyzes the hydrolysis of S-D-lactoyl-glutathione to form glutathione and D-lactic acid. In Vibrio parahaemolyticus serotype O3:K6 (strain RIMD 2210633), this protein is Hydroxyacylglutathione hydrolase.